Consider the following 366-residue polypeptide: Dual-specificity RNA methyltransferase RlmN (366 aa).

Glu102 (proton acceptor) is an active-site residue. In terms of domain architecture, Radical SAM core spans 108 to 340 (DEGRNTLCVS…TTTRKTRGRD (233 aa)). Cys115 and Cys345 are joined by a disulfide. [4Fe-4S] cluster is bound by residues Cys122, Cys126, and Cys129. Residues 171–172 (GE), Ser203, 225–227 (SLH), and Asn302 contribute to the S-adenosyl-L-methionine site. Cys345 serves as the catalytic S-methylcysteine intermediate.

It belongs to the radical SAM superfamily. RlmN family. Requires [4Fe-4S] cluster as cofactor.

It is found in the cytoplasm. It carries out the reaction adenosine(2503) in 23S rRNA + 2 reduced [2Fe-2S]-[ferredoxin] + 2 S-adenosyl-L-methionine = 2-methyladenosine(2503) in 23S rRNA + 5'-deoxyadenosine + L-methionine + 2 oxidized [2Fe-2S]-[ferredoxin] + S-adenosyl-L-homocysteine. It catalyses the reaction adenosine(37) in tRNA + 2 reduced [2Fe-2S]-[ferredoxin] + 2 S-adenosyl-L-methionine = 2-methyladenosine(37) in tRNA + 5'-deoxyadenosine + L-methionine + 2 oxidized [2Fe-2S]-[ferredoxin] + S-adenosyl-L-homocysteine. Functionally, specifically methylates position 2 of adenine 2503 in 23S rRNA and position 2 of adenine 37 in tRNAs. m2A2503 modification seems to play a crucial role in the proofreading step occurring at the peptidyl transferase center and thus would serve to optimize ribosomal fidelity. The protein is Dual-specificity RNA methyltransferase RlmN of Methylococcus capsulatus (strain ATCC 33009 / NCIMB 11132 / Bath).